The primary structure comprises 112 residues: UPF0342 protein SPT_0901 (112 aa).

Belongs to the UPF0342 family.

The sequence is that of UPF0342 protein SPT_0901 from Streptococcus pneumoniae (strain Taiwan19F-14).